Reading from the N-terminus, the 168-residue chain is Lipoprotein signal peptidase (168 aa).

4 helical membrane-spanning segments follow: residues 15-35 (WLWL…VVMD), 47-67 (VLPF…SFLS), 75-95 (WLFT…MSKL), and 107-127 (ALII…GFVV). Active-site residues include Asp-128 and Asp-146. A helical membrane pass occupies residues 141 to 161 (AFNLADTTICIGAAMIILDGF).

This sequence belongs to the peptidase A8 family.

Its subcellular location is the cell inner membrane. It catalyses the reaction Release of signal peptides from bacterial membrane prolipoproteins. Hydrolyzes -Xaa-Yaa-Zaa-|-(S,diacylglyceryl)Cys-, in which Xaa is hydrophobic (preferably Leu), and Yaa (Ala or Ser) and Zaa (Gly or Ala) have small, neutral side chains.. The protein operates within protein modification; lipoprotein biosynthesis (signal peptide cleavage). Its function is as follows. This protein specifically catalyzes the removal of signal peptides from prolipoproteins. The sequence is that of Lipoprotein signal peptidase from Vibrio campbellii (strain ATCC BAA-1116).